Consider the following 348-residue polypeptide: Erlin-1 (348 aa).

Over 1 to 7 (MNMTQAR) the chain is Cytoplasmic. Residues 8–28 (VLVAAVVGLVAVLLYASIHKI) form a helical membrane-spanning segment. Residues 29-348 (EEGHLAVYYR…NVIQNKESTG (320 aa)) lie on the Lumenal side of the membrane. N-linked (GlcNAc...) asparagine glycosylation is present at Asn-108. N6-acetyllysine is present on Lys-269. A disordered region spans residues 325–348 (SSLPSKEALEPSGENVIQNKESTG). A compositionally biased stretch (polar residues) spans 339–348 (NVIQNKESTG).

It belongs to the band 7/mec-2 family. Forms a heteromeric complex with ERLIN2. In complex with ERLIN2, interacts with RNF170. Interacts with AMFR and SYVN1. Post-translationally, deubiquitinated by USP25; leading to stabilization. Expressed in heart, placenta, liver, kidney, pancreas, prostate, testis, ovary and small intestine.

Its subcellular location is the endoplasmic reticulum membrane. Component of the ERLIN1/ERLIN2 complex which mediates the endoplasmic reticulum-associated degradation (ERAD) of inositol 1,4,5-trisphosphate receptors (IP3Rs). Involved in regulation of cellular cholesterol homeostasis by regulation the SREBP signaling pathway. Binds cholesterol and may promote ER retention of the SCAP-SREBF complex. Its function is as follows. (Microbial infection) Required early in hepatitis C virus (HCV) infection to initiate RNA replication, and later in the infection to support infectious virus production. The polypeptide is Erlin-1 (Homo sapiens (Human)).